The following is a 499-amino-acid chain: UDP-N-acetylmuramoylalanine--D-glutamate ligase (499 aa).

129–135 (GTNGKTT) lines the ATP pocket.

This sequence belongs to the MurCDEF family.

The protein resides in the cytoplasm. The catalysed reaction is UDP-N-acetyl-alpha-D-muramoyl-L-alanine + D-glutamate + ATP = UDP-N-acetyl-alpha-D-muramoyl-L-alanyl-D-glutamate + ADP + phosphate + H(+). The protein operates within cell wall biogenesis; peptidoglycan biosynthesis. Its function is as follows. Cell wall formation. Catalyzes the addition of glutamate to the nucleotide precursor UDP-N-acetylmuramoyl-L-alanine (UMA). This chain is UDP-N-acetylmuramoylalanine--D-glutamate ligase, found in Ralstonia nicotianae (strain ATCC BAA-1114 / GMI1000) (Ralstonia solanacearum).